Reading from the N-terminus, the 101-residue chain is MAKNSMKAREAKRAKLVAKFAEKRAALKAIISDVNASEEDRWNAVLTLQSLPRDSSASRQRNRCNQTGRPHGYLRKFGLSRIKVREACMKGEIPGLRKASW.

The protein belongs to the universal ribosomal protein uS14 family. As to quaternary structure, part of the 30S ribosomal subunit. Contacts proteins S3 and S10.

In terms of biological role, binds 16S rRNA, required for the assembly of 30S particles and may also be responsible for determining the conformation of the 16S rRNA at the A site. This is Small ribosomal subunit protein uS14 from Vibrio campbellii (strain ATCC BAA-1116).